The chain runs to 111 residues: Putative splicing factor C222.18 (111 aa).

In terms of domain architecture, RRM spans 18–95 (HTLYIRNFGT…DIIFVEWAKS (78 aa)).

This sequence belongs to the splicing factor SR family.

Its subcellular location is the nucleus. Functionally, has a role in pre-mRNA splicing where it is involved in spliceosome assembly. This chain is Putative splicing factor C222.18, found in Schizosaccharomyces pombe (strain 972 / ATCC 24843) (Fission yeast).